A 310-amino-acid chain; its full sequence is Biotin synthase (310 aa).

Residues 34–262 form the Radical SAM core domain; the sequence is GRVQLCALVN…TAQIRLSAGR (229 aa). [4Fe-4S] cluster contacts are provided by Cys49, Cys53, and Cys56. [2Fe-2S] cluster contacts are provided by Cys93, Cys125, Cys185, and Arg257.

This sequence belongs to the radical SAM superfamily. Biotin synthase family. Homodimer. The cofactor is [4Fe-4S] cluster. Requires [2Fe-2S] cluster as cofactor.

It carries out the reaction (4R,5S)-dethiobiotin + (sulfur carrier)-SH + 2 reduced [2Fe-2S]-[ferredoxin] + 2 S-adenosyl-L-methionine = (sulfur carrier)-H + biotin + 2 5'-deoxyadenosine + 2 L-methionine + 2 oxidized [2Fe-2S]-[ferredoxin]. The protein operates within cofactor biosynthesis; biotin biosynthesis; biotin from 7,8-diaminononanoate: step 2/2. Its function is as follows. Catalyzes the conversion of dethiobiotin (DTB) to biotin by the insertion of a sulfur atom into dethiobiotin via a radical-based mechanism. The polypeptide is Biotin synthase (Synechococcus sp. (strain JA-3-3Ab) (Cyanobacteria bacterium Yellowstone A-Prime)).